The following is a 154-amino-acid chain: Protein X (154 aa).

The tract at residues 68–117 is mitochondrial targeting sequence; the sequence is PCALRFTSARRMETTVNAHGNLPKVLHKRTLGLSAMSTTDLEAYFKDCVF.

This sequence belongs to the orthohepadnavirus protein X family. As to quaternary structure, may form homodimer. May interact with host CEBPA, CFLAR, CREB1, DDB1, E4F1, HBXIP, HSPD1/HSP60, NFKBIA, POLR2E and SMAD4. Interacts with host SMC5-SMC6 complex and induces its degradation. Interacts with host TRPC4AP; leading to prevent ubiquitination of TRPC4AP. Interacts with host PLSCR1; this interaction promotes ubiquitination and degradation of HBx and impairs HBx-mediated cell proliferation. Post-translationally, a fraction may be phosphorylated in insect cells and HepG2 cells, a human hepatoblastoma cell line. Phosphorylated in vitro by host protein kinase C or mitogen-activated protein kinase. N-acetylated in insect cells.

Its subcellular location is the host cytoplasm. It localises to the host nucleus. The protein resides in the host mitochondrion. Its function is as follows. Multifunctional protein that plays a role in silencing host antiviral defenses and promoting viral transcription. Does not seem to be essential for HBV infection. May be directly involved in development of cirrhosis and liver cancer (hepatocellular carcinoma). Most of cytosolic activities involve modulation of cytosolic calcium. The effect on apoptosis is controversial depending on the cell types in which the studies have been conducted. May induce apoptosis by localizing in mitochondria and causing loss of mitochondrial membrane potential. May also modulate apoptosis by binding host CFLAR, a key regulator of the death-inducing signaling complex (DISC). Promotes viral transcription by using the host E3 ubiquitin ligase DDB1 to target the SMC5-SMC6 complex to proteasomal degradation. This host complex would otherwise bind to viral episomal DNA, and prevents its transcription. Moderately stimulates transcription of many different viral and cellular transcription elements. Promoters and enhancers stimulated by HBx contain DNA binding sites for NF-kappa-B, AP-1, AP-2, c-EBP, ATF/CREB, or the calcium-activated factor NF-AT. This is Protein X from Hepatitis B virus genotype B/C subtype adw (isolate Okinawa/pODW282/1998) (HBV-B).